Reading from the N-terminus, the 202-residue chain is Peptidyl-tRNA hydrolase (202 aa).

Residue Tyr19 participates in tRNA binding. The Proton acceptor role is filled by His24. TRNA-binding residues include Tyr70, Asn72, and Asn118.

This sequence belongs to the PTH family. Monomer.

Its subcellular location is the cytoplasm. The catalysed reaction is an N-acyl-L-alpha-aminoacyl-tRNA + H2O = an N-acyl-L-amino acid + a tRNA + H(+). Functionally, hydrolyzes ribosome-free peptidyl-tRNAs (with 1 or more amino acids incorporated), which drop off the ribosome during protein synthesis, or as a result of ribosome stalling. In terms of biological role, catalyzes the release of premature peptidyl moieties from peptidyl-tRNA molecules trapped in stalled 50S ribosomal subunits, and thus maintains levels of free tRNAs and 50S ribosomes. The polypeptide is Peptidyl-tRNA hydrolase (Prochlorococcus marinus (strain NATL1A)).